Here is a 504-residue protein sequence, read N- to C-terminus: Beta-glucosidase 24 (504 aa).

A signal peptide spans 1–18 (MELLWLLLLLLMASSTSS). Q47 serves as a coordination point for a beta-D-glucoside. N75 carries an N-linked (GlcNAc...) asparagine glycan. Residues H151 and 196-197 (NE) each bind a beta-D-glucoside. E197 functions as the Proton donor in the catalytic mechanism. A disulfide bond links C216 and C224. N329 is a glycosylation site (N-linked (GlcNAc...) asparagine). Y340 serves as a coordination point for a beta-D-glucoside. The N-linked (GlcNAc...) asparagine glycan is linked to N371. Residue E411 participates in a beta-D-glucoside binding. E411 functions as the Nucleophile in the catalytic mechanism. N421 carries N-linked (GlcNAc...) asparagine glycosylation. A beta-D-glucoside is bound by residues W460, 467–468 (EW), and F476.

It belongs to the glycosyl hydrolase 1 family.

The catalysed reaction is Hydrolysis of terminal, non-reducing beta-D-glucosyl residues with release of beta-D-glucose.. The chain is Beta-glucosidase 24 (BGLU24) from Oryza sativa subsp. japonica (Rice).